The chain runs to 603 residues: Isovalerate--CoA ligase AAE2 (603 aa).

It belongs to the ATP-dependent AMP-binding enzyme family. Expressed at low levels in leaves, flowers and developing seeds.

It catalyses the reaction 3-methylbutanoate + ATP + CoA = 3-methylbutanoyl-CoA + AMP + diphosphate. The enzyme catalyses hexanoate + ATP + CoA = hexanoyl-CoA + AMP + diphosphate. The catalysed reaction is butanoate + ATP + CoA = butanoyl-CoA + AMP + diphosphate. It carries out the reaction pentanoate + ATP + CoA = pentanoyl-CoA + AMP + diphosphate. It catalyses the reaction 3-methylpentanoate + ATP + CoA = 3-methylpentanoyl-CoA + AMP + diphosphate. The enzyme catalyses 4-methylpentanoate + ATP + CoA = 4-methylpentanoyl-CoA + AMP + diphosphate. Functionally, catalyzes the ligation of CoA on isovalerate to produce 3-methylbutanoyl-CoA. Can also use butanoate, pentanoate, hexanoate, 3-methylpentanoate and 4-methylpentanoate as substrates with a lower efficiency. The chain is Isovalerate--CoA ligase AAE2 from Arabidopsis thaliana (Mouse-ear cress).